The sequence spans 185 residues: Elongation factor P (185 aa).

Belongs to the elongation factor P family.

The protein localises to the cytoplasm. The protein operates within protein biosynthesis; polypeptide chain elongation. Functionally, involved in peptide bond synthesis. Stimulates efficient translation and peptide-bond synthesis on native or reconstituted 70S ribosomes in vitro. Probably functions indirectly by altering the affinity of the ribosome for aminoacyl-tRNA, thus increasing their reactivity as acceptors for peptidyl transferase. This chain is Elongation factor P, found in Dictyoglomus turgidum (strain DSM 6724 / Z-1310).